A 135-amino-acid polypeptide reads, in one-letter code: Large ribosomal subunit protein bL19 (135 aa).

The protein belongs to the bacterial ribosomal protein bL19 family.

In terms of biological role, this protein is located at the 30S-50S ribosomal subunit interface and may play a role in the structure and function of the aminoacyl-tRNA binding site. This chain is Large ribosomal subunit protein bL19, found in Xanthomonas euvesicatoria pv. vesicatoria (strain 85-10) (Xanthomonas campestris pv. vesicatoria).